The primary structure comprises 129 residues: MLTPLQIYFPIGVVLLVAVVLAFTMLGLANVLGPRRPSLVKQTPFECGSEPIGSARERFGVKFYVVALLFIVFDIEAIFLYPWAVLLLPDGQGYPGLGWPGFISMGIFVFTLVAGLVYVWKKGVLDWAD.

Transmembrane regions (helical) follow at residues Phe9 to Ala29, Leu68 to Leu88, and Leu97 to Val117.

Belongs to the complex I subunit 3 family. As to quaternary structure, NDH-1 is composed of 14 different subunits. Subunits NuoA, H, J, K, L, M, N constitute the membrane sector of the complex.

The protein localises to the cell inner membrane. It catalyses the reaction a quinone + NADH + 5 H(+)(in) = a quinol + NAD(+) + 4 H(+)(out). Functionally, NDH-1 shuttles electrons from NADH, via FMN and iron-sulfur (Fe-S) centers, to quinones in the respiratory chain. The immediate electron acceptor for the enzyme in this species is believed to be ubiquinone. Couples the redox reaction to proton translocation (for every two electrons transferred, four hydrogen ions are translocated across the cytoplasmic membrane), and thus conserves the redox energy in a proton gradient. The protein is NADH-quinone oxidoreductase subunit A of Anaeromyxobacter dehalogenans (strain 2CP-C).